A 217-amino-acid chain; its full sequence is Large ribosomal subunit protein bL25 (217 aa).

Low complexity predominate over residues 195–211 (PAEGAAAAPAKGAAKGA). The disordered stretch occupies residues 195–217 (PAEGAAAAPAKGAAKGAAKGGKK).

This sequence belongs to the bacterial ribosomal protein bL25 family. CTC subfamily. In terms of assembly, part of the 50S ribosomal subunit; part of the 5S rRNA/L5/L18/L25 subcomplex. Contacts the 5S rRNA. Binds to the 5S rRNA independently of L5 and L18.

Its function is as follows. This is one of the proteins that binds to the 5S RNA in the ribosome where it forms part of the central protuberance. In Acidiphilium cryptum (strain JF-5), this protein is Large ribosomal subunit protein bL25.